A 151-amino-acid polypeptide reads, in one-letter code: Regulatory protein RecX (151 aa).

The protein belongs to the RecX family.

It is found in the cytoplasm. In terms of biological role, modulates RecA activity. The protein is Regulatory protein RecX of Chlorobium phaeobacteroides (strain BS1).